Consider the following 330-residue polypeptide: Protein RfbI (330 aa).

Residues 3–89 (HIIKIFPSNI…ELNAHFFPEL (87 aa)) enclose the 2Fe-2S ferredoxin-type domain. [2Fe-2S] cluster contacts are provided by Cys-37, Cys-42, and Cys-45. One can recognise an FAD-binding FR-type domain in the interval 94-192 (KKIVPCKVNS…EGPCGTFFIR (99 aa)).

[2Fe-2S] cluster is required as a cofactor.

It participates in bacterial outer membrane biogenesis; LPS O-antigen biosynthesis. In Salmonella typhimurium (strain LT2 / SGSC1412 / ATCC 700720), this protein is Protein RfbI (rfbI).